The following is a 132-amino-acid chain: Small ribosomal subunit protein uS8 (132 aa).

It belongs to the universal ribosomal protein uS8 family. In terms of assembly, part of the 30S ribosomal subunit. Contacts proteins S5 and S12.

Its function is as follows. One of the primary rRNA binding proteins, it binds directly to 16S rRNA central domain where it helps coordinate assembly of the platform of the 30S subunit. In Chelativorans sp. (strain BNC1), this protein is Small ribosomal subunit protein uS8.